Reading from the N-terminus, the 120-residue chain is uncharacterized protein (120 aa).

An N-terminal signal peptide occupies residues 1–19 (MTSFAVVARLITRAPRVRA). Disordered stretches follow at residues 48 to 71 (VAKK…DKAK) and 90 to 120 (DTVT…KNLK). Positions 90-103 (DTVTGKTEETKESI) are enriched in basic and acidic residues.

This is an uncharacterized protein from Arabidopsis thaliana (Mouse-ear cress).